The sequence spans 365 residues: Flagellar P-ring protein (365 aa).

An N-terminal signal peptide occupies residues 1–19; the sequence is MIKFLSALILLLVTTAAQA.

The protein belongs to the FlgI family. In terms of assembly, the basal body constitutes a major portion of the flagellar organelle and consists of four rings (L,P,S, and M) mounted on a central rod.

It localises to the periplasm. The protein localises to the bacterial flagellum basal body. In terms of biological role, assembles around the rod to form the L-ring and probably protects the motor/basal body from shearing forces during rotation. This Escherichia coli O9:H4 (strain HS) protein is Flagellar P-ring protein.